We begin with the raw amino-acid sequence, 630 residues long: A-type voltage-gated potassium channel KCND2 (630 aa).

Residues 1–184 lie on the Cytoplasmic side of the membrane; that stretch reads MAAGVAAWLP…FENPHTSTMA (184 aa). Positions 2-20 are interaction with KCNIP1, KCNIP2, and other family members; the sequence is AAGVAAWLPFARAAAIGWM. Thr38 carries the post-translational modification Phosphothreonine. The segment at 71–90 is interaction with KCNIP1; it reads ERDFFYHPETQQYFFDRDPD. Zn(2+) contacts are provided by His105, Cys111, Cys132, and Cys133. The helical transmembrane segment at 185–206 threads the bilayer; sequence LVFYYVTGFFIAVSVIANVVET. At 207–226 the chain is on the extracellular side; it reads VPCGSSPGHIKELPCGERYA. Residues 227 to 249 traverse the membrane as a helical segment; the sequence is VAFFCLDTACVMIFTVEYLLRLA. Over 250–256 the chain is Cytoplasmic; that stretch reads AAPSRYR. Residues 257 to 281 traverse the membrane as a helical segment; it reads FVRSVMSIIDVVAILPYYIGLVMTD. Topologically, residues 282-287 are extracellular; it reads NEDVSG. The helical; Voltage-sensor transmembrane segment at 288 to 307 threads the bilayer; that stretch reads AFVTLRVFRVFRIFKFSRHS. At 308–321 the chain is on the cytoplasmic side; it reads QGLRILGYTLKSCA. The tract at residues 308–321 is S4-S5 linker; the sequence is QGLRILGYTLKSCA. The chain crosses the membrane as a helical span at residues 322–345; sequence SELGFLLFSLTMAIIIFATVMFYA. Residues 346-357 lie on the Extracellular side of the membrane; sequence EKGSSASKFTSI. Positions 358–369 form an intramembrane region, helical; that stretch reads PAAFWYTIVTMT. Residues Thr370, Leu371, Gly372, and Tyr373 each coordinate K(+). A Selectivity filter motif is present at residues 370–375; sequence TLGYGD. The stretch at 370–377 is an intramembrane region; that stretch reads TLGYGDMV. The Extracellular portion of the chain corresponds to 378–380; that stretch reads PKT. Residues 381–403 traverse the membrane as a helical segment; it reads IAGKIFGSICSLSGVLVIALPVP. Over 404–630 the chain is Cytoplasmic; the sequence is VIVSNFSRIY…GGNIVRVSAL (227 aa). Ser438 is subject to Phosphoserine. Positions 474-489 are required for dendritic targeting; sequence FETQHHHLLHCLEKTT. Residues 474–630 are important for normal channel activation and inactivation, for interaction with KCNIP2, and probably other family members as well; the sequence is FETQHHHLLH…GGNIVRVSAL (157 aa). 4 positions are modified to phosphoserine: Ser548, Ser552, Ser572, and Ser575. Positions 600 to 623 are disordered; sequence IPTPPVTTPEGDDRPESPEYSGGN. Residues Thr602 and Thr607 each carry the phosphothreonine modification. The residue at position 616 (Ser616) is a Phosphoserine. Residues 627–630 carry the PDZ-binding motif; that stretch reads VSAL.

Belongs to the potassium channel family. D (Shal) (TC 1.A.1.2) subfamily. Kv4.2/KCND2 sub-subfamily. Homotetramer or heterotetramer with KCND1 or KCND3. Associates with the regulatory subunits KCNIP2, KCNIP3 and KCNIP4. Interacts with the regulatory subunit KCNIP1; this interaction mediates the capture of both the N- and C-terminus of KCND2, preventing N-type inactivation and stabilizing the S6 conformation, thereby accelerating closed state inactivation and recovery. Interacts with DPP10, DLG4 and DLG1. In vivo, probably exists as heteromeric complex containing variable proportions of KCND1, KCND2, KCND3, KCNIP1, KCNIP2, KCNIP3, KCNIP4, DPP6 and DPP10. The tetrameric channel can associate with up to four regulatory subunits, such as KCNIP2 or KCNIP4. Interaction with KCNIP3 promotes tetramerization and formation of a functional potassium channel. Interaction with four KCNIP4 chains does not reduce interaction with DPP10. Probably part of a complex consisting of KCNIP1, KCNIP2 isoform 3 and KCND2. Interacts with FLNA and FLNC. Interacts with NCS1/FREQ. Identified in a complex with cAMP-dependent protein kinase (PKA), CAV3, AKAP6 and KCND3 in cardiac myocytes. Interacts (via S1 and S2 helices) with DPP6; this interaction stabilizes the conformation of the S1-S2 helices and facilitates S4 conformational change, including S4 sliding up and down, thereby accelerating activation, inactivation, and recovery. Post-translationally, phosphorylation at Ser-438 in response to MAPK activation is increased in stimulated dendrites. Interaction with KCNIP2 and DPP6 propomtes phosphorylation by PKA at Ser-552. Phosphorylation at Ser-552 has no effect on interaction with KCNIP3, but is required for the regulation of channel activity by KCNIP3. Phosphorylation at Ser-552 leads to KCND2 internalization. Phosphorylated by MAPK in response to signaling via the metabotropic glutamate receptor GRM5. Phosphorylation at Ser-616 is required for the down-regulation of neuronal A-type currents in response to signaling via GRM5. As to expression, detected in brain cortex, hippocampus, dentate gyrus, thalamus and cerebellum. Detected in neurons from the primary visual cortex. Detected in the supraoptic nucleus in hypothalamus, in hippocampus and the habenular nucleus of the thalamus. Detected in the bed nucleus of the stria terminalis. Detected in dendritic fields in the hippocampus CA1 layer, in stratum radiatum, stratum oriens, stratum lacunosum-moleculare and stratum pyramidale. Detected in dendritic fields in the hippocampus CA3 layer and in dentate gyrus. Detected in the cerebellum granule cell layer, where it localizes at synapses. Detected in the main olfactory bulb, especially in the granule cell layer and the external plexiform layer, but also the mitral layer. Detected in heart atrium and ventricle. Detected in heart left ventricle (at protein level). Highly expressed in heart and throughout the brain, with similar levels in cortex and hypothalamus, and much higher levels in hippocampus, dentate gyrus and the habenular nucleus of the thalamus. Detected in brain, and at lower levels in heart atrium and ventricle. Detected in neurons from the bed nucleus of the stria terminalis. Detected in aorta, cardiac and smooth muscle.

It is found in the cell membrane. Its subcellular location is the cell projection. The protein resides in the dendrite. The protein localises to the synapse. It localises to the perikaryon. It is found in the postsynaptic cell membrane. Its subcellular location is the dendritic spine. The protein resides in the sarcolemma. The protein localises to the cell junction. It localises to the membrane. It is found in the caveola. The enzyme catalyses K(+)(in) = K(+)(out). Inhibited by 5 mM 4-aminopyridine (4-AP). Not inhibited by dendrotoxins and by tetraethylammonium (TEA). Inhibited by 10 mM flecainide and 20 mM quinidine. Inhibited by the heteropodatoxins HpTx(1), HpTx(2), and HpTx(3). Functionally, voltage-gated potassium channel that mediates transmembrane potassium transport in excitable membranes, primarily in the brain, but also in rodent heart. Mediates the major part of the dendritic A-type current I(SA) in brain neurons. This current is activated at membrane potentials that are below the threshold for action potentials. It regulates neuronal excitability, prolongs the latency before the first spike in a series of action potentials, regulates the frequency of repetitive action potential firing, shortens the duration of action potentials and regulates the back-propagation of action potentials from the neuronal cell body to the dendrites. Contributes to the regulation of the circadian rhythm of action potential firing in suprachiasmatic nucleus neurons, which regulates the circadian rhythm of locomotor activity. Functions downstream of the metabotropic glutamate receptor GRM5 and plays a role in neuronal excitability and in nociception mediated by activation of GRM5. Mediates the transient outward current I(to) in rodent heart left ventricle apex cells, but not in human heart, where this current is mediated by another family member. Forms tetrameric potassium-selective channels through which potassium ions pass in accordance with their electrochemical gradient. The channel alternates between opened and closed conformations in response to the voltage difference across the membrane. Can form functional homotetrameric channels and heterotetrameric channels that contain variable proportions of KCND2 and KCND3; channel properties depend on the type of pore-forming alpha subunits that are part of the channel. In vivo, membranes probably contain a mixture of heteromeric potassium channel complexes. Interaction with specific isoforms of the regulatory subunits KCNIP1, KCNIP2, KCNIP3 or KCNIP4 strongly increases expression at the cell surface and thereby increases channel activity; it modulates the kinetics of channel activation and inactivation, shifts the threshold for channel activation to more negative voltage values, shifts the threshold for inactivation to less negative voltages and accelerates recovery after inactivation. Likewise, interaction with DPP6 or DPP10 promotes expression at the cell membrane and regulates both channel characteristics and activity. Upon depolarization, the channel goes from a resting closed state (C state) to an activated but non-conducting state (C* state), from there, the channel may either inactivate (I state) or open (O state). The chain is A-type voltage-gated potassium channel KCND2 from Rattus norvegicus (Rat).